The primary structure comprises 260 residues: 14-3-3-like protein C (260 aa).

It belongs to the 14-3-3 family.

The sequence is that of 14-3-3-like protein C from Nicotiana tabacum (Common tobacco).